Reading from the N-terminus, the 200-residue chain is Elongation factor Ts (200 aa).

An involved in Mg(2+) ion dislocation from EF-Tu region spans residues 83–86 (TDFA).

The protein belongs to the EF-Ts family.

The protein localises to the cytoplasm. Its function is as follows. Associates with the EF-Tu.GDP complex and induces the exchange of GDP to GTP. It remains bound to the aminoacyl-tRNA.EF-Tu.GTP complex up to the GTP hydrolysis stage on the ribosome. In Syntrophobacter fumaroxidans (strain DSM 10017 / MPOB), this protein is Elongation factor Ts.